The following is a 1185-amino-acid chain: DNA-directed RNA polymerase subunit beta' (1185 aa).

Zn(2+)-binding residues include cysteine 60, cysteine 62, cysteine 75, and cysteine 78. Residues aspartate 449, aspartate 451, and aspartate 453 each contribute to the Mg(2+) site. Residues cysteine 774, cysteine 853, cysteine 860, and cysteine 863 each contribute to the Zn(2+) site.

Belongs to the RNA polymerase beta' chain family. The RNAP catalytic core consists of 2 alpha, 1 beta, 1 beta' and 1 omega subunit. When a sigma factor is associated with the core the holoenzyme is formed, which can initiate transcription. Mg(2+) is required as a cofactor. Requires Zn(2+) as cofactor.

It carries out the reaction RNA(n) + a ribonucleoside 5'-triphosphate = RNA(n+1) + diphosphate. DNA-dependent RNA polymerase catalyzes the transcription of DNA into RNA using the four ribonucleoside triphosphates as substrates. The chain is DNA-directed RNA polymerase subunit beta' from Desulforamulus reducens (strain ATCC BAA-1160 / DSM 100696 / MI-1) (Desulfotomaculum reducens).